We begin with the raw amino-acid sequence, 516 residues long: GMP synthase [glutamine-hydrolyzing] (516 aa).

In terms of domain architecture, Glutamine amidotransferase type-1 spans 10-201 (KIIVLDFGSQ…AFDVCGAVAN (192 aa)). Cys-87 acts as the Nucleophile in catalysis. Residues His-175 and Glu-177 contribute to the active site. In terms of domain architecture, GMPS ATP-PPase spans 202–391 (WTMADFIDMQ…LGIPHDLVWR (190 aa)). 229 to 235 (SGGVDSS) provides a ligand contact to ATP.

Homodimer.

It carries out the reaction XMP + L-glutamine + ATP + H2O = GMP + L-glutamate + AMP + diphosphate + 2 H(+). The protein operates within purine metabolism; GMP biosynthesis; GMP from XMP (L-Gln route): step 1/1. Catalyzes the synthesis of GMP from XMP. This chain is GMP synthase [glutamine-hydrolyzing], found in Lactobacillus acidophilus (strain ATCC 700396 / NCK56 / N2 / NCFM).